Reading from the N-terminus, the 122-residue chain is Nitrogen fixation nifHD region GlnB-like protein 2 (122 aa).

This sequence belongs to the P(II) protein family.

In terms of biological role, could be involved in the regulation of nitrogen fixation. The protein is Nitrogen fixation nifHD region GlnB-like protein 2 (glnBB) of Methanobacterium ivanovii.